Consider the following 174-residue polypeptide: Regenerating islet-derived protein 3-gamma (174 aa).

The N-terminal stretch at 1-26 is a signal peptide; that stretch reads MLPRVALTTMSWMLLSSLMLLSQVQG. Positions 27-37 are excised as a propeptide; that stretch reads EDAKEDVPTSR. Intrachain disulfides connect Cys-40/Cys-51, Cys-68/Cys-170, and Cys-145/Cys-162. The C-type lectin domain maps to 47–171; the sequence is YGSYCYALFS…CISELPYVCK (125 aa). Positions 103–118 are sufficient to activate EXTL3; the sequence is WIGLHDPTLGQEPNRG. Residue His-107 participates in Zn(2+) binding. The short motif at 114 to 116 is the EPN element; sequence EPN. 2 residues coordinate Zn(2+): Glu-121 and His-144.

Forms a hexameric membrane-permeabilizing oligomeric pore on membrane phospholipids. The hexamer is formed by three dimers related by helical symmetry. Forms filaments, filamentation traps pore complexes and limits damage to host cells. Interacts with EXTL3. Proteolytic processing by trypsin removes an inhibitory N-terminal propeptide and is essential for peptidoglycan binding and antibacterial activity. As to expression, expressed in injured skeletal muscles and sciatic nerve (at protein level). Expressed in the pancreas. Expression increases during the acute phase of pancreatitis.

It localises to the secreted. Its subcellular location is the cytoplasm. With respect to regulation, lipopolysaccharide inhibits pore-forming activity, explaining why is bactericidal for Gram-positive but not Gram-negative bacteria. In terms of biological role, bactericidal C-type lectin which acts exclusively against Gram-positive bacteria and mediates bacterial killing by binding to surface-exposed carbohydrate moieties of peptidoglycan. Restricts bacterial colonization of the intestinal epithelial surface and consequently limits activation of adaptive immune responses by the microbiota. Functionally, acts as a hormone in response to different stimuli like anti-inflammatory signals, such as IL17A, or gut microbiome. Is secreted by different cell types to activate its receptor EXTL3 and induce cell specific signaling pathways. Induced by IL17A in keratinocytes, regulates keratinocyte proliferation and differentiation after skin injury. In parallel, inhibits skin inflammation through the inhibition of inflammatory cytokines such as IL6 and TNF. Induced by IL22 in lung epithelial cells, inhibits cytokine production and regulates allergic airway inflammation. Induced in small intestine by inulin-enriched diet and Lactobacillus gasseri enriched microbiome, plays a role in the improvement of gut barrier function, the regulation of energy balance and glucose levels. Modulates microbiota composition in duodenal contents. Produced by nociceptor in response to endotoxins, prevents endotoxic death by targeting kynurenine pathway in microglia. Has bacteriostatic activity. Its function is as follows. Has bactericidal activity against L.monocytogenes and methicillin-resistant S.aureus. The sequence is that of Regenerating islet-derived protein 3-gamma from Rattus norvegicus (Rat).